The sequence spans 337 residues: Probable sulfurtransferase (337 aa).

ATP is bound at residue glycine 83. 2 residues coordinate [4Fe-4S] cluster: cysteine 172 and cysteine 175. Lysine 179 and glycine 206 together coordinate ATP. Position 284 (cysteine 284) interacts with [4Fe-4S] cluster.

This sequence belongs to the TtcA family. It depends on [4Fe-4S] cluster as a cofactor. Requires Mg(2+) as cofactor.

The sequence is that of Probable sulfurtransferase from Methanocaldococcus jannaschii (strain ATCC 43067 / DSM 2661 / JAL-1 / JCM 10045 / NBRC 100440) (Methanococcus jannaschii).